A 177-amino-acid chain; its full sequence is Adenine phosphoribosyltransferase (177 aa).

It belongs to the purine/pyrimidine phosphoribosyltransferase family. As to quaternary structure, homodimer.

The protein resides in the cytoplasm. The catalysed reaction is AMP + diphosphate = 5-phospho-alpha-D-ribose 1-diphosphate + adenine. It functions in the pathway purine metabolism; AMP biosynthesis via salvage pathway; AMP from adenine: step 1/1. Functionally, catalyzes a salvage reaction resulting in the formation of AMP, that is energically less costly than de novo synthesis. This chain is Adenine phosphoribosyltransferase, found in Leuconostoc citreum (strain KM20).